Consider the following 80-residue polypeptide: Cell division activator CedA (80 aa).

It belongs to the CedA family.

Activates the cell division inhibited by chromosomal DNA over-replication. This is Cell division activator CedA from Escherichia coli O139:H28 (strain E24377A / ETEC).